The primary structure comprises 293 residues: Acetyl-coenzyme A carboxylase carboxyl transferase subunit beta (293 aa).

Positions 29 to 293 constitute a CoA carboxyltransferase N-terminal domain; the sequence is LWVKCSECSQ…GVNELVEANI (265 aa). The Zn(2+) site is built by Cys-33, Cys-36, Cys-52, and Cys-55. The C4-type zinc finger occupies 33 to 55; sequence CSECSQVAYRKDLISNFNVCSNC.

The protein belongs to the AccD/PCCB family. As to quaternary structure, acetyl-CoA carboxylase is a heterohexamer composed of biotin carboxyl carrier protein (AccB), biotin carboxylase (AccC) and two subunits each of ACCase subunit alpha (AccA) and ACCase subunit beta (AccD). Requires Zn(2+) as cofactor.

The protein localises to the cytoplasm. It carries out the reaction N(6)-carboxybiotinyl-L-lysyl-[protein] + acetyl-CoA = N(6)-biotinyl-L-lysyl-[protein] + malonyl-CoA. It functions in the pathway lipid metabolism; malonyl-CoA biosynthesis; malonyl-CoA from acetyl-CoA: step 1/1. Its function is as follows. Component of the acetyl coenzyme A carboxylase (ACC) complex. Biotin carboxylase (BC) catalyzes the carboxylation of biotin on its carrier protein (BCCP) and then the CO(2) group is transferred by the transcarboxylase to acetyl-CoA to form malonyl-CoA. This Prochlorococcus marinus (strain MIT 9215) protein is Acetyl-coenzyme A carboxylase carboxyl transferase subunit beta.